The primary structure comprises 406 residues: Succinylornithine transaminase/acetylornithine aminotransferase (406 aa).

Pyridoxal 5'-phosphate contacts are provided by residues 108–109 (GA) and phenylalanine 141. Arginine 144 provides a ligand contact to N(2)-acetyl-L-ornithine. 226–229 (DEVQ) provides a ligand contact to pyridoxal 5'-phosphate. An N6-(pyridoxal phosphate)lysine modification is found at lysine 255. Threonine 283 is a binding site for N(2)-acetyl-L-ornithine. A pyridoxal 5'-phosphate-binding site is contributed by threonine 284.

Belongs to the class-III pyridoxal-phosphate-dependent aminotransferase family. ArgD subfamily. As to quaternary structure, homodimer. The cofactor is pyridoxal 5'-phosphate.

The protein localises to the cytoplasm. The catalysed reaction is N(2)-succinyl-L-ornithine + 2-oxoglutarate = N-succinyl-L-glutamate 5-semialdehyde + L-glutamate. The enzyme catalyses N(2)-acetyl-L-ornithine + 2-oxoglutarate = N-acetyl-L-glutamate 5-semialdehyde + L-glutamate. Its pathway is amino-acid biosynthesis; L-arginine biosynthesis; N(2)-acetyl-L-ornithine from L-glutamate: step 4/4. It participates in amino-acid degradation; L-arginine degradation via AST pathway; L-glutamate and succinate from L-arginine: step 3/5. Its function is as follows. Transaminates both N(2)-acetylornithine and N(2)-succinylornithine. The protein is Succinylornithine transaminase/acetylornithine aminotransferase (aruC) of Pseudomonas aeruginosa (strain ATCC 15692 / DSM 22644 / CIP 104116 / JCM 14847 / LMG 12228 / 1C / PRS 101 / PAO1).